The chain runs to 424 residues: Protein arginine N-methyltransferase 2 (424 aa).

Disordered regions lie at residues 67–89 and 151–212; these read DEAQ…EQKS and YEPL…SSRY. Polar residues predominate over residues 71-89; it reads TETNGVNGETSSASTEQKS. Composition is skewed to low complexity over residues 163–173 and 187–201; these read TGQGEDAANEP and ETTA…ASTE. Residues 205-424 enclose the RMT2 domain; sequence PDVTSSRYLD…YRLPLCKFMD (220 aa). S-adenosyl-L-methionine is bound by residues Tyr-212, Met-241, 261–266, 282–284, 309–310, and Asp-329; these read HGMGIV, EAH, and WQ.

It belongs to the class I-like SAM-binding methyltransferase superfamily. RMT2 methyltransferase family. As to quaternary structure, monomer.

It is found in the cytoplasm. It localises to the nucleus. Functionally, S-adenosyl-L-methionine-dependent protein-arginine N-methyltransferase that methylates the delta-nitrogen atom of arginine residues to form N5-methylarginine (type IV) in target proteins. Monomethylates ribosomal protein L12. This is Protein arginine N-methyltransferase 2 from Aspergillus fumigatus (strain ATCC MYA-4609 / CBS 101355 / FGSC A1100 / Af293) (Neosartorya fumigata).